Reading from the N-terminus, the 277-residue chain is MKTKLDFVKMKENGEPIVMLTAYDYPQAKLAEQAGVDMILVGDSLGMVVLGLDSTVGVTVSDMIHHTKAVKRGAKNTFIVTDMPFMSYHLSKEDTLKNAAAIIQESGADALKLEGGDGVFESIRALTLGGIPVVSHLGLTPQSVGVLGGYKVQGKDEQSAKKLIEDSIKCEQAGAMMLVLECVPAELTAKIKEEVSIPVIGIGAGSKADGQVLVYHDVVGHGVDRTPKFVKQYAKIDGTIESALSGYVRDVKERVFPEEKHSFQINQTVLQGLYGGK.

2 residues coordinate Mg(2+): D43 and D82. 3-methyl-2-oxobutanoate is bound by residues D43 to S44, D82, and K112. E114 is a Mg(2+) binding site. E181 serves as the catalytic Proton acceptor.

Belongs to the PanB family. Homodecamer; pentamer of dimers. The cofactor is Mg(2+).

It is found in the cytoplasm. It catalyses the reaction 3-methyl-2-oxobutanoate + (6R)-5,10-methylene-5,6,7,8-tetrahydrofolate + H2O = 2-dehydropantoate + (6S)-5,6,7,8-tetrahydrofolate. It participates in cofactor biosynthesis; (R)-pantothenate biosynthesis; (R)-pantoate from 3-methyl-2-oxobutanoate: step 1/2. Functionally, catalyzes the reversible reaction in which hydroxymethyl group from 5,10-methylenetetrahydrofolate is transferred onto alpha-ketoisovalerate to form ketopantoate. The protein is 3-methyl-2-oxobutanoate hydroxymethyltransferase of Bacillus velezensis (strain DSM 23117 / BGSC 10A6 / LMG 26770 / FZB42) (Bacillus amyloliquefaciens subsp. plantarum).